A 295-amino-acid chain; its full sequence is 4-hydroxy-tetrahydrodipicolinate synthase (295 aa).

Residue Thr-47 participates in pyruvate binding. Residue Tyr-135 is the Proton donor/acceptor of the active site. The active-site Schiff-base intermediate with substrate is the Lys-163. Ile-204 contacts pyruvate.

It belongs to the DapA family. In terms of assembly, homotetramer; dimer of dimers.

The protein localises to the cytoplasm. It carries out the reaction L-aspartate 4-semialdehyde + pyruvate = (2S,4S)-4-hydroxy-2,3,4,5-tetrahydrodipicolinate + H2O + H(+). It participates in amino-acid biosynthesis; L-lysine biosynthesis via DAP pathway; (S)-tetrahydrodipicolinate from L-aspartate: step 3/4. Its function is as follows. Catalyzes the condensation of (S)-aspartate-beta-semialdehyde [(S)-ASA] and pyruvate to 4-hydroxy-tetrahydrodipicolinate (HTPA). The polypeptide is 4-hydroxy-tetrahydrodipicolinate synthase (Caldicellulosiruptor bescii (strain ATCC BAA-1888 / DSM 6725 / KCTC 15123 / Z-1320) (Anaerocellum thermophilum)).